The primary structure comprises 119 residues: Large ribosomal subunit protein bL20 (119 aa).

The protein belongs to the bacterial ribosomal protein bL20 family.

Its function is as follows. Binds directly to 23S ribosomal RNA and is necessary for the in vitro assembly process of the 50S ribosomal subunit. It is not involved in the protein synthesizing functions of that subunit. This is Large ribosomal subunit protein bL20 from Mycoplasma capricolum subsp. capricolum (strain California kid / ATCC 27343 / NCTC 10154).